Reading from the N-terminus, the 163-residue chain is NADH-quinone oxidoreductase subunit I (163 aa).

4Fe-4S ferredoxin-type domains are found at residues 53-83 (LRRY…IEAG) and 94-123 (VRYD…EGPN). Residues Cys-63, Cys-66, Cys-69, Cys-73, Cys-103, Cys-106, Cys-109, and Cys-113 each coordinate [4Fe-4S] cluster.

Belongs to the complex I 23 kDa subunit family. NDH-1 is composed of 14 different subunits. Subunits NuoA, H, J, K, L, M, N constitute the membrane sector of the complex. [4Fe-4S] cluster is required as a cofactor.

The protein localises to the cell inner membrane. It carries out the reaction a quinone + NADH + 5 H(+)(in) = a quinol + NAD(+) + 4 H(+)(out). In terms of biological role, NDH-1 shuttles electrons from NADH, via FMN and iron-sulfur (Fe-S) centers, to quinones in the respiratory chain. The immediate electron acceptor for the enzyme in this species is believed to be ubiquinone. Couples the redox reaction to proton translocation (for every two electrons transferred, four hydrogen ions are translocated across the cytoplasmic membrane), and thus conserves the redox energy in a proton gradient. The chain is NADH-quinone oxidoreductase subunit I from Chelativorans sp. (strain BNC1).